The chain runs to 258 residues: Tryptophan synthase alpha chain (258 aa).

Catalysis depends on proton acceptor residues E52 and D63.

Belongs to the TrpA family. In terms of assembly, tetramer of two alpha and two beta chains.

The catalysed reaction is (1S,2R)-1-C-(indol-3-yl)glycerol 3-phosphate + L-serine = D-glyceraldehyde 3-phosphate + L-tryptophan + H2O. It functions in the pathway amino-acid biosynthesis; L-tryptophan biosynthesis; L-tryptophan from chorismate: step 5/5. Its function is as follows. The alpha subunit is responsible for the aldol cleavage of indoleglycerol phosphate to indole and glyceraldehyde 3-phosphate. This chain is Tryptophan synthase alpha chain, found in Streptococcus pneumoniae (strain ATCC 700669 / Spain 23F-1).